A 224-amino-acid polypeptide reads, in one-letter code: Proline/serine-rich protein C17A5.10 (224 aa).

A compositionally biased stretch (pro residues) spans 1–10 (MTDDSVPPPS). Positions 1 to 110 (MTDDSVPPPS…SNYNTAKPPY (110 aa)) are disordered. A compositionally biased stretch (low complexity) spans 31-52 (TSTSAGHPSSSSSTLPNYAASS). Polar residues-rich tracts occupy residues 53 to 68 (LNSRPVSSSGSGNAYS), 77 to 94 (PTSQRPNSWQPGNASTMY), and 101 to 110 (SNYNTAKPPY).

Belongs to the HUA1 family.

The protein resides in the cytoplasm. Functionally, may be involved in assembly and disassembly of the actin cytoskeleton. This is Proline/serine-rich protein C17A5.10 from Schizosaccharomyces pombe (strain 972 / ATCC 24843) (Fission yeast).